The chain runs to 210 residues: Thymidylate kinase (210 aa).

10–17 (GPEGAGKS) is an ATP binding site.

It belongs to the thymidylate kinase family.

The catalysed reaction is dTMP + ATP = dTDP + ADP. Functionally, phosphorylation of dTMP to form dTDP in both de novo and salvage pathways of dTTP synthesis. This is Thymidylate kinase from Pseudomonas putida (strain ATCC 700007 / DSM 6899 / JCM 31910 / BCRC 17059 / LMG 24140 / F1).